The primary structure comprises 566 residues: Alpha-amylase (566 aa).

The first 28 residues, 1–28 (MARRLATASLAVLAAAATALTAPTPAAA), serve as a signal peptide directing secretion. 3 residues coordinate Ca(2+): asparagine 120, glutamine 166, and aspartate 175. The active-site Nucleophile is the aspartate 205. Histidine 209 provides a ligand contact to Ca(2+). The active-site Proton donor is the glutamate 232. A CBM20 domain is found at 465-566 (GPGTGQTSAS…ALTLNDTWRG (102 aa)).

It belongs to the glycosyl hydrolase 13 family. Monomer. Ca(2+) is required as a cofactor.

It catalyses the reaction Endohydrolysis of (1-&gt;4)-alpha-D-glucosidic linkages in polysaccharides containing three or more (1-&gt;4)-alpha-linked D-glucose units.. This chain is Alpha-amylase (amy), found in Streptomyces griseus.